The chain runs to 348 residues: Heat-inducible transcription repressor HrcA (348 aa).

It belongs to the HrcA family.

In terms of biological role, negative regulator of class I heat shock genes (grpE-dnaK-dnaJ and groELS operons). Prevents heat-shock induction of these operons. The polypeptide is Heat-inducible transcription repressor HrcA (Thermomicrobium roseum (strain ATCC 27502 / DSM 5159 / P-2)).